The primary structure comprises 395 residues: MEGIINIGTFIEQLTHYIKIGIFINKGVSSDKNHILDKCINLHNKLKSIEGSKEISPEEETYVRRSIKRFNLVLKVNPDQSPIDIKDKENQRKMITFQEHSSITDNDINSMITYSSNYNINIFSDVPLTFILRDGKYQQLLWQYTRSLFYISQVIISKVESKADMNNPVNVYKKNIVDSSMKKLEDILSTIAEIEDSIELEKILSLDQFLKSKLSNIKITNNQIDEAKAEFKEMFNKKGITGNDAISRMIDSITGKLDTINSGQGNILQNIVGIAQSVASEMRGEIENNPESIKSTLAAVTDIFKEATVNSNENENIPPELKNIFGAVMSSPLLSKIQGQESTENISDDVLGKELEILSQTYGLDKDEIMKAMKNETGEMDPTKFEQFMQKFQSN.

Residues 182–238 (KKLEDILSTIAEIEDSIELEKILSLDQFLKSKLSNIKITNNQIDEAKAEFKEMFNKK) adopt a coiled-coil conformation.

This is an uncharacterized protein from Acanthamoeba polyphaga (Amoeba).